A 389-amino-acid polypeptide reads, in one-letter code: Protein MEI2-like 7 (389 aa).

The segment covering 170-184 (RRGMSKVYKPRKPQR) has biased composition (basic residues). Residues 170–211 (RRGMSKVYKPRKPQRAGRERSPSPSPVFTTRPMSPTPPMQKL) form a disordered region. An RRM domain is found at 216–320 (TTVMVRNIPN…KIIDIRAARI (105 aa)). A disordered region spans residues 351 to 370 (PRDGSTAGAGAPSPPAVKTV).

Functionally, probable RNA-binding protein that may play a role in growth regulation. This is Protein MEI2-like 7 (OML7) from Oryza sativa subsp. japonica (Rice).